Consider the following 1103-residue polypeptide: PALM2-AKAP2 fusion protein (1103 aa).

2 disordered regions span residues 178 to 197 (ESASNATETSGPDMTIKKPP) and 304 to 396 (YNGT…SSRD). A compositionally biased stretch (polar residues) spans 179-189 (SASNATETSGP). Residues S322, S352, and S383 each carry the phosphoserine modification. Residues 380–392 (VPVSPSSTTSSRC) are compositionally biased toward low complexity. Residue K405 forms a Glycyl lysine isopeptide (Lys-Gly) (interchain with G-Cter in SUMO1); alternate linkage. A Glycyl lysine isopeptide (Lys-Gly) (interchain with G-Cter in SUMO2); alternate cross-link involves residue K405. The stretch at 444–521 (EEMLELEKER…QKQLQQQQQQ (78 aa)) forms a coiled coil. 2 disordered regions span residues 483–544 (EQLD…DKAK) and 566–662 (NSRQ…SKLW). The span at 490 to 505 (LESHKKYKERKERRAQ) shows a compositional bias: basic and acidic residues. The span at 506–521 (QEQLLLQKQLQQQQQQ) shows a compositional bias: low complexity. The span at 522-531 (PPSQLCTAPA) shows a compositional bias: polar residues. Residues 533–544 (SHERASMIDKAK) are compositionally biased toward basic and acidic residues. The segment covering 566-579 (NSRQAVAKGQSTPR) has biased composition (polar residues). A phosphoserine mark is found at S567 and S624. The span at 633 to 643 (AAGSQGNTASQ) shows a compositional bias: polar residues. 3 positions are modified to phosphoserine: S692, S696, and S748. Residues 745–763 (QENSLADFSLPQTPQTDNP) are compositionally biased toward polar residues. The interval 745–794 (QENSLADFSLPQTPQTDNPSEGRGEGVSKSFSDHGFYSPSSTLGDSPLVD) is disordered. T757 carries the post-translational modification Phosphothreonine. Residues 797-810 (LEYQAGLLVQNAIQ) form a PKA-RII subunit binding domain region. Residues 817 to 829 (VDKAVSKTSRDGA) show a composition bias toward basic and acidic residues. A disordered region spans residues 817-907 (VDKAVSKTSR…GPINMEETRP (91 aa)). A Phosphoserine modification is found at S862. Residues 865 to 886 (QEKRDVLPKILPAEDRALRERG) show a composition bias toward basic and acidic residues. Positions 941 to 979 (KLRSRKQRTLSMIEEEIRAAQEREEELKRQRQVLQSTQS) form a coiled coil. A phosphoserine mark is found at S951, S979, S1009, and S1016. Residues 962–1035 (EREEELKRQR…AAGTQRPKNL (74 aa)) form a disordered region. A compositionally biased stretch (polar residues) spans 976–990 (STQSPRTKNAPSLPS).

Expressed in infantile heart and muscle, and fibroblasts.

Its subcellular location is the apical cell membrane. Its function is as follows. Binds to regulatory subunit (RII) of protein kinase A. May be involved in establishing polarity in signaling systems or in integrating PKA-RII isoforms with downstream effectors to capture, amplify and focus diffuse, trans-cellular signals carried by cAMP. Binds to and modulates the structure of the actin cytoskeleton. This chain is PALM2-AKAP2 fusion protein, found in Homo sapiens (Human).